A 155-amino-acid chain; its full sequence is Cytochrome c oxidase subunit 4, mitochondrial (155 aa).

Residues 1–25 (MLSLRQSIRFFKPATRTLCSSRYLL) constitute a mitochondrion transit peptide. Residue T55 is modified to Phosphothreonine. Positions 111, 119, 134, and 137 each coordinate Zn(2+).

This sequence belongs to the cytochrome c oxidase subunit 5B family. As to quaternary structure, component of the cytochrome c oxidase (complex IV, CIV), a multisubunit enzyme composed of 12 subunits. The complex is composed of a catalytic core of 3 subunits COX1, COX2 and COX3, encoded in the mitochondrial DNA, and 9 supernumerary subunits COX4, COX5A (or COX5B), COX6, COX7, COX8, COX9, COX12, COX13 and COX26, which are encoded in the nuclear genome. The complex exists as a monomer or a dimer and forms supercomplexes (SCs) in the inner mitochondrial membrane with a dimer of ubiquinol-cytochrome c oxidoreductase (cytochrome b-c1 complex, complex III, CIII), resulting in 2 different assemblies (supercomplexes III(2)IV and III(2)IV(2)).

It is found in the mitochondrion inner membrane. It functions in the pathway energy metabolism; oxidative phosphorylation. Its function is as follows. Component of the cytochrome c oxidase, the last enzyme in the mitochondrial electron transport chain which drives oxidative phosphorylation. The respiratory chain contains 3 multisubunit complexes succinate dehydrogenase (complex II, CII), ubiquinol-cytochrome c oxidoreductase (cytochrome b-c1 complex, complex III, CIII) and cytochrome c oxidase (complex IV, CIV), that cooperate to transfer electrons derived from NADH and succinate to molecular oxygen, creating an electrochemical gradient over the inner membrane that drives transmembrane transport and the ATP synthase. Cytochrome c oxidase is the component of the respiratory chain that catalyzes the reduction of oxygen to water. Electrons originating from reduced cytochrome c in the intermembrane space (IMS) are transferred via the dinuclear copper A center (CU(A)) of COX2 and heme A of COX1 to the active site in COX1, a binuclear center (BNC) formed by heme A3 and copper B (CU(B)). The BNC reduces molecular oxygen to 2 water molecules using 4 electrons from cytochrome c in the IMS and 4 protons from the mitochondrial matrix. The sequence is that of Cytochrome c oxidase subunit 4, mitochondrial (COX4) from Saccharomyces cerevisiae (strain ATCC 204508 / S288c) (Baker's yeast).